The chain runs to 224 residues: Response regulator protein GraR (224 aa).

In terms of domain architecture, Response regulatory spans 2-115; sequence QILLVEDDNT…VLIAKLQAIY (114 aa). Asp-51 carries the post-translational modification 4-aspartylphosphate. The ompR/PhoB-type DNA-binding region spans 126 to 224; the sequence is KRTLTWQDAV…KVGKGYMAHE (99 aa). 3 positions are modified to phosphothreonine: Thr-128, Thr-130, and Thr-149.

Interacts with GraX. Post-translationally, phosphorylated by GraS. Phosphorylated by Stk1; phosphorylation increases the DNA-binding activity of GraR.

It is found in the cytoplasm. Member of the two-component regulatory system GraR/GraS involved in resistance against cationic antimicrobial peptides (CAMPs). Upon phosphorylation by GraS, functions as a transcription regulator by direct binding to promoter regions of target genes such as adhesins, exoproteins, transporters, toxins, and proteins involved in cell wall synthesis. Down-regulates the expression of many genes involved in RNA and amino acid synthesis or glycolysis. The protein is Response regulator protein GraR (graR) of Staphylococcus aureus (strain MRSA252).